The following is a 223-amino-acid chain: UPF0441 protein KPK_0672 (223 aa).

The tract at residues S165–G223 is disordered. 2 stretches are compositionally biased toward low complexity: residues V177–T193 and R209–G223.

Belongs to the UPF0441 family.

The polypeptide is UPF0441 protein KPK_0672 (Klebsiella pneumoniae (strain 342)).